The primary structure comprises 503 residues: SusD-like protein P38 (503 aa).

The N-terminal stretch at 1 to 21 (MKKFKNISITFLILISLGVLN) is a signal peptide.

The protein belongs to the SusD family.

The protein localises to the cell outer membrane. Its function is as follows. Polysaccharide-binding protein probably involved in ulvan degradation. Ulvan is the main polysaccharide component of the Ulvales (green seaweed) cell wall. It is composed of disaccharide building blocks comprising 3-sulfated rhamnose (Rha3S) linked to D-glucuronic acid (GlcA), L-iduronic acid (IduA), or D-xylose (Xyl). The SusD-like protein may mediate ulvan oligomer-binding before transport in the periplasm for further degradation. The protein is SusD-like protein P38 of Formosa agariphila (strain DSM 15362 / KCTC 12365 / LMG 23005 / KMM 3901 / M-2Alg 35-1).